The primary structure comprises 428 residues: D-amino acid dehydrogenase (428 aa).

V3–Y17 serves as a coordination point for FAD.

It belongs to the DadA oxidoreductase family. FAD is required as a cofactor.

The enzyme catalyses a D-alpha-amino acid + A + H2O = a 2-oxocarboxylate + AH2 + NH4(+). Its pathway is amino-acid degradation; D-alanine degradation; NH(3) and pyruvate from D-alanine: step 1/1. Functionally, oxidative deamination of D-amino acids. The protein is D-amino acid dehydrogenase of Burkholderia lata (strain ATCC 17760 / DSM 23089 / LMG 22485 / NCIMB 9086 / R18194 / 383).